Here is a 423-residue protein sequence, read N- to C-terminus: Lysosomal acid phosphatase (423 aa).

A signal peptide spans 1-30 (MAGRQSGWSQAALLQFLLGMCLMVMPPIQA). Over 31 to 380 (RSLRFVTLLY…QLASDTADTE (350 aa)) the chain is Lumenal. The active-site Nucleophile is histidine 42. Asparagine 92, asparagine 133, asparagine 167, asparagine 177, asparagine 191, asparagine 197, and asparagine 267 each carry an N-linked (GlcNAc...) asparagine glycan. 3 disulfide bridges follow: cysteine 159–cysteine 370, cysteine 212–cysteine 310, and cysteine 345–cysteine 349. Aspartate 287 functions as the Proton donor in the catalytic mechanism. Asparagine 322 and asparagine 331 each carry an N-linked (GlcNAc...) asparagine glycan. The chain crosses the membrane as a helical span at residues 381–401 (VIVALAVCGSILFLLIVLLLT). The Cytoplasmic segment spans residues 402 to 423 (VLFRMQAQPPGYHHVADREDHA).

It belongs to the histidine acid phosphatase family. Post-translationally, the membrane-bound form is converted to the soluble form by sequential proteolytic processing. First, the C-terminal cytoplasmic tail is removed. Cleavage by a lysosomal protease releases the soluble form in the lysosome lumen.

The protein resides in the lysosome membrane. It localises to the lysosome lumen. It carries out the reaction a phosphate monoester + H2O = an alcohol + phosphate. This Rattus norvegicus (Rat) protein is Lysosomal acid phosphatase (Acp2).